A 325-amino-acid chain; its full sequence is Transcription initiation factor IIB (325 aa).

A TFIIB-type zinc finger spans residues 19–52 (NKLWCMVCRIQDPDIIEDYAKGDLICRGCGVVVG). 4 residues coordinate Zn(2+): Cys-23, Cys-26, Cys-44, and Cys-47. 2 repeat units span residues 131 to 207 (MADH…IMKE) and 227 to 303 (FCST…DLYA).

Belongs to the TFIIB family.

It localises to the nucleus. Its function is as follows. General transcription factor that plays a role in transcription initiation by RNA polymerase II (Pol II). Involved in the pre-initiation complex (PIC) formation and Pol II recruitment at promoter DNA. The chain is Transcription initiation factor IIB (gtf2b) from Dictyostelium discoideum (Social amoeba).